Consider the following 405-residue polypeptide: Glucose-1-phosphate adenylyltransferase 1 (405 aa).

Alpha-D-glucose 1-phosphate is bound by residues tyrosine 96, glycine 161, 176 to 177 (EK), and serine 194.

The protein belongs to the bacterial/plant glucose-1-phosphate adenylyltransferase family. Homotetramer.

The enzyme catalyses alpha-D-glucose 1-phosphate + ATP + H(+) = ADP-alpha-D-glucose + diphosphate. It functions in the pathway glycan biosynthesis; glycogen biosynthesis. Involved in the biosynthesis of ADP-glucose, a building block required for the elongation reactions to produce glycogen. Catalyzes the reaction between ATP and alpha-D-glucose 1-phosphate (G1P) to produce pyrophosphate and ADP-Glc. In Vibrio cholerae serotype O1 (strain ATCC 39315 / El Tor Inaba N16961), this protein is Glucose-1-phosphate adenylyltransferase 1.